The following is a 104-amino-acid chain: Circadian clock oscillator protein KaiB (104 aa).

The protein belongs to the KaiB family. The KaiABC complex composition changes during the circadian cycle to control KaiC phosphorylation. Complexes KaiC(6), KaiA(2-4):KaiC(6), KaiB(6):KaiC(6) and KaiC(6):KaiB(6):KaiA(12) are among the most important forms, many form cooperatively. Undergoes a major conformational rearrangment; in the free state forms homotetramers as a dimer of dimers. When bound to the CI domain of KaiC switches to a monomeric thioredoxin-fold (KaiB(fs)). KaiB(fs) binds CikA, leading it to dephosphorylate phospho-RpaA.

Key component of the KaiABC oscillator complex, which constitutes the main circadian regulator in cyanobacteria. Complex composition changes during the circadian cycle to control KaiC phosphorylation. KaiA stimulates KaiC autophosphorylation, while KaiB sequesters KaiA, leading to KaiC autodephosphorylation. Phospho-Ser-431 KaiC accumulation triggers binding of KaiB to form the KaiB(6):KaiC(6) complex, leading to changes in output regulators CikA and SasA. KaiB switches to a thioredoxin-like fold (KaiB(fs)) when bound to KaiC. KaiB(6):KaiC(6) formation exposes a site for KaiA binding that sequesters KaiA from KaiC, making the KaiC(6):KaiB(6):KaiA(12) complex that results in KaiC autodephosphorylation. Its function is as follows. A metamorphic protein which reversibly switches between an inactive tetrameric fold and a rare, thioredoxin-like monomeric fold (KaiB(fs)). KaiB(fs) binds phospho-KaiC, KaiA and CikA. KaiA and CikA compete for binding to KaiB(fs), and KaiB(fs) and SasA compete for binding to KaiC, thus the clock oscillator and output signal pathway are tightly coupled. The chain is Circadian clock oscillator protein KaiB from Parasynechococcus marenigrum (strain WH8102).